Reading from the N-terminus, the 112-residue chain is ATP synthase epsilon chain (112 aa).

It belongs to the ATPase epsilon chain family. In terms of assembly, F-type ATPases have 2 components, CF(1) - the catalytic core - and CF(0) - the membrane proton channel. CF(1) has five subunits: alpha(3), beta(3), gamma(1), delta(1), epsilon(1). CF(0) has three main subunits: a, b and c.

It localises to the cell inner membrane. Functionally, produces ATP from ADP in the presence of a proton gradient across the membrane. This chain is ATP synthase epsilon chain, found in Rickettsia felis (strain ATCC VR-1525 / URRWXCal2) (Rickettsia azadi).